The primary structure comprises 503 residues: MDLIPNFSMETWLLLVISLVLLYLYGTHSHGIFKKLGIPGPKPLPFLGTILAYRKGFWEFDKYCHKKYGKLWGLYDGRQPVLAITDPDIIKTVLVKECYSTFTNRRNFGPVGILKKAISISEDEEWKRIRALLSPTFTSGKLKEMFPIINQYTDMLVRNMRQGSEEGKPTSMKDIFGAYSMDVITATSFGVNVDSLNNPQDPFVEKVKKLLKFDIFDPLFLSVTLFPFLTPLFEALNVSMFPRDVIDFFKTSVERMKENRMKEKEKQRMDFLQLMINSQNSKVKDSHKALSDVEIVAQSVIFIFAGYETTSSALSFVLYLLAIHPDIQKKLQDEIDAALPNKAHATYDTLLQMEYLDMVVNETLRLYPIAGRLERVCKTDVEINGVFIPKGTVVMIPTFALHKDPHYWPEPEEFRPERFSKKNQDNINPYMYLPFGNGPRNCIGMRFALMNMKVALFRVLQNFSFQPCKETQIPLKLSKQGLLQPEKPLLLKVVSRDETVNGA.

Residue Cys-442 participates in heme binding.

The protein belongs to the cytochrome P450 family. Requires heme as cofactor. Mainly expressed in olfactory epithelium.

The protein localises to the endoplasmic reticulum membrane. It is found in the microsome membrane. It catalyses the reaction an organic molecule + reduced [NADPH--hemoprotein reductase] + O2 = an alcohol + oxidized [NADPH--hemoprotein reductase] + H2O + H(+). Its function is as follows. This isozyme seems to be implicated in olfaction. Active in the demethylation of erythromycin as well as benzphetamine. This Rattus norvegicus (Rat) protein is Cytochrome P450 3A9 (Cyp3a9).